The chain runs to 283 residues: Glutamate racemase (283 aa).

Substrate contacts are provided by residues 13 to 14 (DS) and 45 to 46 (YG). Cys76 functions as the Proton donor/acceptor in the catalytic mechanism. 77 to 78 (NT) is a substrate binding site. Residue Cys186 is the Proton donor/acceptor of the active site. Residue 187–188 (TH) coordinates substrate.

The protein belongs to the aspartate/glutamate racemases family.

The enzyme catalyses L-glutamate = D-glutamate. It participates in cell wall biogenesis; peptidoglycan biosynthesis. In terms of biological role, provides the (R)-glutamate required for cell wall biosynthesis. This chain is Glutamate racemase, found in Microcystis aeruginosa (strain NIES-843 / IAM M-2473).